We begin with the raw amino-acid sequence, 816 residues long: H(+)/Cl(-) exchange transporter 5 (816 aa).

Topologically, residues 1–124 (MAMWQGAMDN…WALIHSVSDA (124 aa)) are cytoplasmic. A run of 2 helical transmembrane segments spans residues 125 to 162 (FSGW…ICTG) and 208 to 231 (VNYF…VKVF). Residues 237–241 (GSGIP) carry the Selectivity filter part_1 motif. Residue S238 participates in chloride binding. The helical intramembrane region spans 240-247 (IPEIKTIL). Transmembrane regions (helical) follow at residues 256–275 (LGKW…VSSG) and 281–300 (EGPL…HCFN). The Selectivity filter part_2 signature appears at 279–283 (GKEGP). 2 consecutive intramembrane regions (helical) follow at residues 312–324 (VLSA…VSVA) and 328–336 (PIGGVLFSL). A run of 5 helical transmembrane segments spans residues 348-366 (LWRS…RSIN), 389-414 (LVPF…IAWC), 422-442 (LGKY…ILAF), 498-518 (MWQL…TFGM), and 523-542 (GLFI…LGVG). A Selectivity filter part_3 motif is present at residues 523 to 527 (GLFIP). F525 contacts chloride. Residues 570–584 (GLYAMVGAAACLGGV) constitute an intramembrane region (helical). Positions 585-587 (TRM) form an intramembrane region, note=Loop between two helices. Residues 588–599 (TVSLVVIMFELT) constitute an intramembrane region (helical). An intramembrane region (note=Loop between two helices) is located at residues 600-604 (GGLEY). Residues 605–622 (IVPLMAAAMTSKWVADAL) form a helical membrane-spanning segment. Over 623–816 (GREGIYDAHI…NQDPDSILFN (194 aa)) the chain is Cytoplasmic. Y628 provides a ligand contact to chloride. CBS domains follow at residues 656 to 720 (MKPR…ARKK) and 752 to 812 (ILDL…DPDS). Residues T666, 687 to 689 (YSG), and 794 to 797 (TKKD) each bind ATP.

This sequence belongs to the chloride channel (TC 2.A.49) family. ClC-5/CLCN5 subfamily. Interacts with NEDD4 and NEDD4L. Ubiquitinated by NEDD4L in the presence of albumin; which promotes endocytosis and proteasomal degradation.

The protein resides in the golgi apparatus membrane. It localises to the endosome membrane. The protein localises to the cell membrane. The enzyme catalyses 2 chloride(in) + H(+)(out) = 2 chloride(out) + H(+)(in). Its function is as follows. Proton-coupled chloride transporter. Functions as antiport system and exchanges chloride ions against protons. Important for normal acidification of the endosome lumen. May play an important role in renal tubular function. The CLC channel family contains both chloride channels and proton-coupled anion transporters that exchange chloride or another anion for protons. The absence of conserved gating glutamate residues is typical for family members that function as channels. This Pongo abelii (Sumatran orangutan) protein is H(+)/Cl(-) exchange transporter 5 (CLCN5).